The sequence spans 732 residues: uncharacterized protein (732 aa).

2 disordered regions span residues Thr-38–Lys-90 and Glu-226–Gln-629. The segment covering Gln-47–Gln-56 has biased composition (low complexity). The segment covering Pro-57–Leu-76 has biased composition (polar residues). Composition is skewed to low complexity over residues Thr-77 to Asn-89, Thr-231 to Ala-247, and Thr-254 to Ser-318. Over residues Lys-327–Thr-338 the composition is skewed to basic residues. Composition is skewed to low complexity over residues Lys-339 to Thr-383, Lys-401 to Lys-421, and Ser-487 to Lys-523. Acidic residues predominate over residues Ala-553 to Asn-566. 2 stretches are compositionally biased toward low complexity: residues Ser-567–Asn-577 and Asp-593–Leu-609. A compositionally biased stretch (acidic residues) spans Ser-610–Asn-621.

This is an uncharacterized protein from Dictyostelium discoideum (Social amoeba).